Here is a 118-residue protein sequence, read N- to C-terminus: Holo-[acyl-carrier-protein] synthase (118 aa).

Positions 8 and 57 each coordinate Mg(2+).

This sequence belongs to the P-Pant transferase superfamily. AcpS family. Mg(2+) serves as cofactor.

The protein localises to the cytoplasm. It catalyses the reaction apo-[ACP] + CoA = holo-[ACP] + adenosine 3',5'-bisphosphate + H(+). In terms of biological role, transfers the 4'-phosphopantetheine moiety from coenzyme A to a Ser of acyl-carrier-protein. The protein is Holo-[acyl-carrier-protein] synthase of Pediococcus pentosaceus (strain ATCC 25745 / CCUG 21536 / LMG 10740 / 183-1w).